Reading from the N-terminus, the 248-residue chain is Ribosomal RNA small subunit methyltransferase J (248 aa).

Residues 97-98 (RD), 113-114 (ER), and aspartate 167 contribute to the S-adenosyl-L-methionine site.

It belongs to the methyltransferase superfamily. RsmJ family.

Its subcellular location is the cytoplasm. It catalyses the reaction guanosine(1516) in 16S rRNA + S-adenosyl-L-methionine = N(2)-methylguanosine(1516) in 16S rRNA + S-adenosyl-L-homocysteine + H(+). Specifically methylates the guanosine in position 1516 of 16S rRNA. The protein is Ribosomal RNA small subunit methyltransferase J of Aeromonas hydrophila subsp. hydrophila (strain ATCC 7966 / DSM 30187 / BCRC 13018 / CCUG 14551 / JCM 1027 / KCTC 2358 / NCIMB 9240 / NCTC 8049).